The following is a 398-amino-acid chain: 4-hydroxy-3-methylbut-2-enyl diphosphate reductase (398 aa).

Cys66 serves as a coordination point for [4Fe-4S] cluster. His96 provides a ligand contact to (2E)-4-hydroxy-3-methylbut-2-enyl diphosphate. His96 contacts dimethylallyl diphosphate. An isopentenyl diphosphate-binding site is contributed by His96. Cys157 is a binding site for [4Fe-4S] cluster. A (2E)-4-hydroxy-3-methylbut-2-enyl diphosphate-binding site is contributed by His185. Dimethylallyl diphosphate is bound at residue His185. His185 lines the isopentenyl diphosphate pocket. Glu187 acts as the Proton donor in catalysis. Thr250 contributes to the (2E)-4-hydroxy-3-methylbut-2-enyl diphosphate binding site. Cys288 contributes to the [4Fe-4S] cluster binding site. Residues Ser317, Ser318, Asn319, and Ser380 each coordinate (2E)-4-hydroxy-3-methylbut-2-enyl diphosphate. Dimethylallyl diphosphate-binding residues include Ser317, Ser318, Asn319, and Ser380. Residues Ser317, Ser318, Asn319, and Ser380 each contribute to the isopentenyl diphosphate site.

It belongs to the IspH family. Requires [4Fe-4S] cluster as cofactor.

The enzyme catalyses isopentenyl diphosphate + 2 oxidized [2Fe-2S]-[ferredoxin] + H2O = (2E)-4-hydroxy-3-methylbut-2-enyl diphosphate + 2 reduced [2Fe-2S]-[ferredoxin] + 2 H(+). It catalyses the reaction dimethylallyl diphosphate + 2 oxidized [2Fe-2S]-[ferredoxin] + H2O = (2E)-4-hydroxy-3-methylbut-2-enyl diphosphate + 2 reduced [2Fe-2S]-[ferredoxin] + 2 H(+). The protein operates within isoprenoid biosynthesis; dimethylallyl diphosphate biosynthesis; dimethylallyl diphosphate from (2E)-4-hydroxy-3-methylbutenyl diphosphate: step 1/1. It participates in isoprenoid biosynthesis; isopentenyl diphosphate biosynthesis via DXP pathway; isopentenyl diphosphate from 1-deoxy-D-xylulose 5-phosphate: step 6/6. In terms of biological role, catalyzes the conversion of 1-hydroxy-2-methyl-2-(E)-butenyl 4-diphosphate (HMBPP) into a mixture of isopentenyl diphosphate (IPP) and dimethylallyl diphosphate (DMAPP). Acts in the terminal step of the DOXP/MEP pathway for isoprenoid precursor biosynthesis. This Prochlorococcus marinus (strain AS9601) protein is 4-hydroxy-3-methylbut-2-enyl diphosphate reductase.